Consider the following 327-residue polypeptide: MENGIKESQVGLNKNGTHAILPSPVVSEGHKNHKSILNSLMSGALAGAVAKTAVAPLDRTKIIFQVSSNRFSAKEAYRLIYRTYLNEGFLSLWRGNSATMVRVIPYAAIQFCAHEQYKKLLGSYYGFQGSALTPIPRLLAGALAGTTATIITYPLDLVRARMAVTPKEMYSNIIHVFMRMSREEGLKSLYRGFTPTVLGVIPYAGISFFTYETLKKLHAEHSGRTQPYPFERLLFGACAGLFGQSASYPLDVVRRRMQTAGVTGHAYGSIIGTMQEIVAEEGVIRGLYKGLSMNWVKGPVAVGISFTTFDLTQILLKKLQRLSDIQR.

3 Solcar repeats span residues Lys-34–Leu-120, Leu-132–Leu-217, and Pro-227–Leu-315. Helical transmembrane passes span Ile-36–Pro-56, Leu-92–Cys-112, Leu-138–Val-158, Leu-189–Phe-209, Leu-233–Val-253, and Val-296–Leu-316.

It belongs to the mitochondrial carrier (TC 2.A.29) family.

The protein resides in the mitochondrion inner membrane. The enzyme catalyses ADP(out) + CoA(in) = ADP(in) + CoA(out). The catalysed reaction is 3'-dephospho-CoA(in) + ADP(out) = 3'-dephospho-CoA(out) + ADP(in). It catalyses the reaction adenosine 3',5'-bisphosphate(in) + ADP(out) = adenosine 3',5'-bisphosphate(out) + ADP(in). It carries out the reaction AMP(in) + ADP(out) = AMP(out) + ADP(in). The enzyme catalyses dADP(in) + ADP(out) = dADP(out) + ADP(in). The catalysed reaction is ADP(in) + ATP(out) = ADP(out) + ATP(in). Mitochondrial carrier mediating the transport of coenzyme A (CoA) in mitochondria in exchange for intramitochondrial (deoxy)adenine nucleotides and adenosine 3',5'-diphosphate. This is Mitochondrial coenzyme A transporter SLC25A42 (slc25a42) from Xenopus tropicalis (Western clawed frog).